A 1505-amino-acid chain; its full sequence is Myosin-6 (1505 aa).

Positions 8–57 (SVGSFVWVEDPDEAWIDGEVVQVNGDEIKVLCTSGKHVVTKISNAYPKDV) constitute a Myosin N-terminal SH3-like domain. A Myosin motor domain is found at 62–731 (SGVDDMTRLA…QMADLDTRRT (670 aa)). ATP contacts are provided by residues 156-163 (GESGAGKT) and 209-217 (NNNSSRFGK). 4 actin-binding regions span residues 495 to 529 (LIEK…YQTF), 531 to 554 (THKR…AGDV), 589 to 612 (FPPM…KQQL), and 612 to 634 (LVSL…KPNN). IQ domains are found at residues 734 to 763 (LGRS…SAKQ), 757 to 786 (LRNS…EAAA), 782 to 811 (REAA…AAVS), 805 to 834 (LYSA…TKAA), 830 to 859 (QTKA…AAIT), and 853 to 882 (LKKA…AARE). Residues 883-1048 (TGALQAAKNK…AEKKIMHQQT (166 aa)) adopt a coiled-coil conformation. Residues 1148–1452 (DRLIQMIGSA…ISSMRTLMTE (305 aa)) form the Dilute domain.

This sequence belongs to the TRAFAC class myosin-kinesin ATPase superfamily. Myosin family. Plant myosin class XI subfamily. Homodimer. Interacts with RABC2A and RABD1. As to expression, expressed in flowers, leaves, roots and stems.

It localises to the cytoplasm. In terms of biological role, myosin heavy chain that is required for the cell cycle-regulated transport of various organelles and proteins for their segregation. Functions by binding with its tail domain to receptor proteins on organelles and exerting force with its N-terminal motor domain against actin filaments, thereby transporting its cargo along polarized actin cables. Involved in the tip growth of root hair cells. Plays a major role in trafficking of Golgi stacks, mitochondria and peroxisomes during root hair development. Targets the peroxisome through an interaction with RABC2A. Required for development of pavement cells, trichomes, and stigmatic papillae. This Arabidopsis thaliana (Mouse-ear cress) protein is Myosin-6 (XI-2).